The primary structure comprises 273 residues: Zinc finger protein 32 (273 aa).

C2H2-type zinc fingers lie at residues 77-99 (YECQ…ERIH), 105-127 (FECT…QRIH), and 133-155 (YQCK…ERLH). Zn(2+) contacts are provided by cysteine 79, cysteine 82, histidine 95, histidine 99, cysteine 107, cysteine 110, histidine 123, histidine 127, serine 141, glutamine 144, glycine 157, tyrosine 161, phenylalanine 198, lysine 201, leucine 214, alanine 218, cysteine 247, cysteine 250, histidine 263, and cysteine 267. 2 C2H2-type zinc fingers span residues 161 to 183 (YECA…RRVH) and 189 to 211 (YRCD…IRVH). The C2H2-type 6 zinc-finger motif lies at 217-239 (YACTQCRKSFHTRGNCILHGKIH). A CCHC-type zinc finger spans residues 245–267 (YLCGQCGKSFTQRGSLAVHQRSC).

It belongs to the krueppel C2H2-type zinc-finger protein family.

It localises to the nucleus. In terms of biological role, may be involved in transcriptional regulation. In Homo sapiens (Human), this protein is Zinc finger protein 32 (ZNF32).